The sequence spans 446 residues: Chromosomal replication initiator protein DnaA (446 aa).

The segment at 1 to 73 (MAAQLNELWQ…INSMKIITTK (73 aa)) is domain I, interacts with DnaA modulators. The segment at 73-107 (KKYDIAFLISSEEALETDEDQETDTNNVNTDTSSS) is domain II. Residues 108 to 324 (MLNPKYKFDS…GALIRIVAFS (217 aa)) are domain III, AAA+ region. The ATP site is built by Gly152, Gly154, Lys155, and Thr156. Residues 325-446 (SLTNKEISVD…NEITKRFSPK (122 aa)) are domain IV, binds dsDNA.

This sequence belongs to the DnaA family. In terms of assembly, oligomerizes as a right-handed, spiral filament on DNA at oriC.

It is found in the cytoplasm. Its function is as follows. Plays an essential role in the initiation and regulation of chromosomal replication. ATP-DnaA binds to the origin of replication (oriC) to initiate formation of the DNA replication initiation complex once per cell cycle. Binds the DnaA box (a 9 base pair repeat at the origin) and separates the double-stranded (ds)DNA. Forms a right-handed helical filament on oriC DNA; dsDNA binds to the exterior of the filament while single-stranded (ss)DNA is stabiized in the filament's interior. The ATP-DnaA-oriC complex binds and stabilizes one strand of the AT-rich DNA unwinding element (DUE), permitting loading of DNA polymerase. After initiation quickly degrades to an ADP-DnaA complex that is not apt for DNA replication. Binds acidic phospholipids. This is Chromosomal replication initiator protein DnaA from Clostridium acetobutylicum (strain ATCC 824 / DSM 792 / JCM 1419 / IAM 19013 / LMG 5710 / NBRC 13948 / NRRL B-527 / VKM B-1787 / 2291 / W).